A 203-amino-acid chain; its full sequence is Large ribosomal subunit protein bL25 (203 aa).

Residues 1–21 are disordered; that stretch reads MMENLQVNQREKKTRHSSRQC. Over residues 12–21 the composition is skewed to basic residues; it reads KKTRHSSRQC.

This sequence belongs to the bacterial ribosomal protein bL25 family. CTC subfamily. Part of the 50S ribosomal subunit; part of the 5S rRNA/L5/L18/L25 subcomplex. Contacts the 5S rRNA. Binds to the 5S rRNA independently of L5 and L18.

Its function is as follows. This is one of the proteins that binds to the 5S RNA in the ribosome where it forms part of the central protuberance. The chain is Large ribosomal subunit protein bL25 from Clostridium perfringens (strain 13 / Type A).